The following is a 441-amino-acid chain: tRNA modification GTPase MnmE (441 aa).

3 residues coordinate (6S)-5-formyl-5,6,7,8-tetrahydrofolate: Arg-24, Glu-81, and Lys-121. The region spanning 218-366 (GMVVAIAGPP…LLRELTRFAA (149 aa)) is the TrmE-type G domain. Residues 228-233 (NVGKST), 247-253 (SPHAGTT), and 272-275 (DTAG) each bind GTP. Mg(2+) is bound by residues Ser-232 and Thr-253. Position 441 (Lys-441) interacts with (6S)-5-formyl-5,6,7,8-tetrahydrofolate.

The protein belongs to the TRAFAC class TrmE-Era-EngA-EngB-Septin-like GTPase superfamily. TrmE GTPase family. As to quaternary structure, homodimer. Heterotetramer of two MnmE and two MnmG subunits. Requires K(+) as cofactor.

It localises to the cytoplasm. Its function is as follows. Exhibits a very high intrinsic GTPase hydrolysis rate. Involved in the addition of a carboxymethylaminomethyl (cmnm) group at the wobble position (U34) of certain tRNAs, forming tRNA-cmnm(5)s(2)U34. The chain is tRNA modification GTPase MnmE from Rhodopseudomonas palustris (strain ATCC BAA-98 / CGA009).